A 317-amino-acid polypeptide reads, in one-letter code: tRNA dimethylallyltransferase (317 aa).

21-28 (GPTASGKS) provides a ligand contact to ATP. Residue 23-28 (TASGKS) coordinates substrate. Positions 46–49 (DSMQ) are interaction with substrate tRNA.

The protein belongs to the IPP transferase family. In terms of assembly, monomer. Requires Mg(2+) as cofactor.

It carries out the reaction adenosine(37) in tRNA + dimethylallyl diphosphate = N(6)-dimethylallyladenosine(37) in tRNA + diphosphate. Functionally, catalyzes the transfer of a dimethylallyl group onto the adenine at position 37 in tRNAs that read codons beginning with uridine, leading to the formation of N6-(dimethylallyl)adenosine (i(6)A). The polypeptide is tRNA dimethylallyltransferase (Nitrobacter hamburgensis (strain DSM 10229 / NCIMB 13809 / X14)).